Consider the following 250-residue polypeptide: Probable transcriptional regulatory protein Emin_1151 (250 aa).

The protein belongs to the TACO1 family.

It is found in the cytoplasm. The protein is Probable transcriptional regulatory protein Emin_1151 of Elusimicrobium minutum (strain Pei191).